Here is a 496-residue protein sequence, read N- to C-terminus: RNA-binding motif protein, Y chromosome, family 1 member A1 (496 aa).

Positions 8–85 constitute an RRM domain; sequence GKLFIGGLNR…KAIKVEQAKK (78 aa). 2 disordered regions span residues 78–349 and 452–496; these read IKVE…HRDY and KDQR…SSRY. Low complexity-rich tracts occupy residues 97 to 114 and 149 to 159; these read PASS…SARG and PVKRGPSSRSG. The span at 175 to 184 shows a compositional bias: polar residues; that stretch reads NSWMGSQGPM. Composition is skewed to basic and acidic residues over residues 204–214, 242–253, 276–289, 313–326, 335–349, and 484–496; these read RNDRMSTRHDG, DNGHSNRDEHSS, AYRD…DESY, GYRD…HESY, SSRE…HRDY, and GESR…SSRY.

In terms of assembly, interacts with splicing factor proteins SFRS3/SRP20, TRA2B/SFRS10, KHDRBS1/SAM68 and KHDRBS3. Testis-specific.

The protein resides in the nucleus. Its function is as follows. RNA-binding protein involved in pre-mRNA splicing. Required for sperm development. Acts additively with TRA2B to promote exon 7 inclusion of the survival motor neuron SMN. Binds non-specifically to mRNAs. The polypeptide is RNA-binding motif protein, Y chromosome, family 1 member A1 (RBMY1A1) (Homo sapiens (Human)).